The following is a 385-amino-acid chain: Putative mitochondrial carrier protein TRV_02148.2 (385 aa).

Solcar repeat units follow at residues S24 to R124 and R130 to R210. Helical transmembrane passes span G30 to L47, A132 to T150, W184 to L207, Y263 to I279, and V294 to L310.

This sequence belongs to the mitochondrial carrier (TC 2.A.29) family.

It localises to the mitochondrion inner membrane. May function as a mitochondrial transporter. The chain is Putative mitochondrial carrier protein TRV_02148.2 from Trichophyton verrucosum (strain HKI 0517).